The primary structure comprises 294 residues: N-acetylmuramic acid 6-phosphate etherase (294 aa).

One can recognise an SIS domain in the interval 56-219 (TSYSLRNGGR…STLSMVSVGK (164 aa)). The active-site Proton donor is the E84. Residue E115 is part of the active site.

It belongs to the GCKR-like family. MurNAc-6-P etherase subfamily. As to quaternary structure, homodimer.

The enzyme catalyses N-acetyl-D-muramate 6-phosphate + H2O = N-acetyl-D-glucosamine 6-phosphate + (R)-lactate. Its pathway is amino-sugar metabolism; 1,6-anhydro-N-acetylmuramate degradation. It functions in the pathway amino-sugar metabolism; N-acetylmuramate degradation. It participates in cell wall biogenesis; peptidoglycan recycling. Its function is as follows. Specifically catalyzes the cleavage of the D-lactyl ether substituent of MurNAc 6-phosphate, producing GlcNAc 6-phosphate and D-lactate. Together with AnmK, is also required for the utilization of anhydro-N-acetylmuramic acid (anhMurNAc) either imported from the medium or derived from its own cell wall murein, and thus plays a role in cell wall recycling. This is N-acetylmuramic acid 6-phosphate etherase from Francisella tularensis subsp. tularensis (strain SCHU S4 / Schu 4).